A 600-amino-acid chain; its full sequence is Epidermal growth factor receptor kinase substrate 8-like protein 3 (600 aa).

Residues 28-155 (QHRVEHLMTC…ALEEELEERP (128 aa)) enclose the PTB domain. 2 disordered regions span residues 152-245 (EERP…PERD) and 429-452 (LHFP…PLSS). The span at 204-214 (SERSISPSSRS) shows a compositional bias: low complexity. Residue serine 238 is modified to Phosphoserine. The region spanning 457–516 (RAALKMQVLYEFEARNAQELTVAQGEILEVLDQSKRWWLVKNEAGLTGYIPSNILEPLPA) is the SH3 domain.

Belongs to the EPS8 family. Interacts with ABI1. Part of a complex that contains SOS1, ABI1 and EPS8L2. Interacts with FASLG. In terms of tissue distribution, detected in embryonic gut. Detected in adult testis, placenta, adrenal gland and intestine.

Its subcellular location is the cytoplasm. The protein is Epidermal growth factor receptor kinase substrate 8-like protein 3 (Eps8l3) of Mus musculus (Mouse).